Here is a 276-residue protein sequence, read N- to C-terminus: uncharacterized protein (276 aa).

A disordered region spans residues 1–70 (MSKAKSPIKS…SDDDEEDSPN (70 aa)). The segment covering 21 to 35 (VLREKKVKDAEKAEH) has biased composition (basic and acidic residues). Residues 105–183 (GVLYVGRLPH…KLLQCKVIPE (79 aa)) enclose the RRM domain. A disordered region spans residues 249-276 (VSHPKAASPVASKKSSKKKNKKVLAAHK). Residues 252–261 (PKAASPVASK) show a composition bias toward low complexity. Residues 262 to 276 (KSSKKKNKKVLAAHK) show a composition bias toward basic residues.

It localises to the nucleus. Its subcellular location is the nucleolus. This is an uncharacterized protein from Schizosaccharomyces pombe (strain 972 / ATCC 24843) (Fission yeast).